We begin with the raw amino-acid sequence, 481 residues long: Wax ester synthase/diacylglycerol acyltransferase 1 (481 aa).

The Cytoplasmic portion of the chain corresponds to 1 to 185 (MKAEKVMERE…TTATKKPADS (185 aa)). The active-site Proton acceptor is H147. The chain crosses the membrane as a helical span at residues 186–206 (MAWWLFVGFWFMIRVTFTTIV). At 207–481 (EFSKLMLTVC…QGEIFHKTEV (275 aa)) the chain is on the lumenal side.

It in the N-terminal section; belongs to the long-chain O-acyltransferase family. As to expression, expressed in flowers, siliques, top parts of stems, and leaves. Not found in roots, seeds and young seedlings.

Its subcellular location is the cell membrane. It is found in the endoplasmic reticulum membrane. The catalysed reaction is a long chain fatty alcohol + a fatty acyl-CoA = a wax ester + CoA. The enzyme catalyses an acyl-CoA + a 1,2-diacyl-sn-glycerol = a triacyl-sn-glycerol + CoA. The protein operates within glycerolipid metabolism; triacylglycerol biosynthesis. It functions in the pathway lipid metabolism. In terms of biological role, bifunctional wax ester synthase/diacylglycerol acyltransferase. Involved in cuticular wax biosynthesis. Required to reduce leaf water loss, especially during drought. This chain is Wax ester synthase/diacylglycerol acyltransferase 1, found in Arabidopsis thaliana (Mouse-ear cress).